The following is a 500-amino-acid chain: NAD(P)H-quinone oxidoreductase chain 4, chloroplastic (500 aa).

14 helical membrane-spanning segments follow: residues 4 to 24, 37 to 57, 87 to 107, 111 to 131, 134 to 154, 167 to 187, 208 to 228, 242 to 262, 272 to 292, 305 to 325, 330 to 350, 386 to 406, 416 to 436, and 462 to 482; these read FPWLTIIVVFPILTGSLIFLL, LCICILELLLTTYTFCYHFQL, IGPILLTGFITTLATLAAWPV, AQLFHFLMLAMYSGQIGSFSS, LLLFFLMWEFELIPVYLLLSM, FILYTAGGSIFLLIGVLGIGL, ALEVIFYVGFLIAFAVKLPII, HYSTCMLLAGILLKMGAYGLV, AHCLFSPGLIIVGAIQIIYAA, IAYSSISHMGFIIIGIGSLSD, GAILQIISHGFIGAALFFLAG, LALPGLSGFVAELLVFFGIIT, ILIAFLMAIGMILTPIYSLSM, and LFVSISLLLPIIGIGIYPDFV.

The protein belongs to the complex I subunit 4 family.

It localises to the plastid. Its subcellular location is the chloroplast thylakoid membrane. It carries out the reaction a plastoquinone + NADH + (n+1) H(+)(in) = a plastoquinol + NAD(+) + n H(+)(out). The catalysed reaction is a plastoquinone + NADPH + (n+1) H(+)(in) = a plastoquinol + NADP(+) + n H(+)(out). The chain is NAD(P)H-quinone oxidoreductase chain 4, chloroplastic from Oenothera biennis (German evening primrose).